A 468-amino-acid polypeptide reads, in one-letter code: Probable serine/threonine-protein phosphatase 2A activator 2 (468 aa).

Residues Ser-412–Ser-424 show a composition bias toward low complexity. The interval Ser-412–Asp-468 is disordered.

It belongs to the PTPA-type PPIase family.

The protein localises to the cytoplasm. It carries out the reaction [protein]-peptidylproline (omega=180) = [protein]-peptidylproline (omega=0). PPIases accelerate the folding of proteins. It catalyzes the cis-trans isomerization of proline imidic peptide bonds in oligopeptides. Acts as a regulatory subunit for PP2A-like phosphatases modulating their activity or substrate specificity, probably by inducing a conformational change in the catalytic subunit, a direct target of the PPIase. The chain is Probable serine/threonine-protein phosphatase 2A activator 2 (ppp2r4B) from Dictyostelium discoideum (Social amoeba).